Here is a 1102-residue protein sequence, read N- to C-terminus: Carbamoyl phosphate synthase large chain (1102 aa).

Residues 1-402 are carboxyphosphate synthetic domain; it reads MPKRTDLKSV…ALQKALRSLE (402 aa). ATP-binding residues include arginine 129, arginine 169, glycine 175, glycine 176, glutamate 208, isoleucine 210, glutamate 215, glycine 241, valine 242, histidine 243, glutamine 285, and glutamate 299. In terms of domain architecture, ATP-grasp 1 spans 133 to 328; the sequence is KGVVERCGAE…IAKIATKLSL (196 aa). Mg(2+) contacts are provided by glutamine 285, glutamate 299, and asparagine 301. Mn(2+) is bound by residues glutamine 285, glutamate 299, and asparagine 301. Positions 403 to 546 are oligomerization domain; that stretch reads QKGSQLDFSS…YHYSSYDEED (144 aa). The interval 547-950 is carbamoyl phosphate synthetic domain; the sequence is EVGLHAKPSV…AFAKSQAAAN (404 aa). The ATP-grasp 2 domain occupies 677–868; the sequence is ARVLDEAGLT…MAKAAALIGT (192 aa). ATP contacts are provided by arginine 713, arginine 752, leucine 754, glutamate 759, glycine 784, isoleucine 785, histidine 786, serine 787, glutamine 827, and glutamate 839. Residues glutamine 827, glutamate 839, and asparagine 841 each contribute to the Mg(2+) site. Residues glutamine 827, glutamate 839, and asparagine 841 each contribute to the Mn(2+) site. One can recognise an MGS-like domain in the interval 951–1096; the sequence is NALPTEGKIF…QEHAANLSAA (146 aa). Residues 951-1102 are allosteric domain; sequence NALPTEGKIF…LSAAMEAANA (152 aa).

This sequence belongs to the CarB family. As to quaternary structure, composed of two chains; the small (or glutamine) chain promotes the hydrolysis of glutamine to ammonia, which is used by the large (or ammonia) chain to synthesize carbamoyl phosphate. Tetramer of heterodimers (alpha,beta)4. It depends on Mg(2+) as a cofactor. Requires Mn(2+) as cofactor.

The catalysed reaction is hydrogencarbonate + L-glutamine + 2 ATP + H2O = carbamoyl phosphate + L-glutamate + 2 ADP + phosphate + 2 H(+). It catalyses the reaction hydrogencarbonate + NH4(+) + 2 ATP = carbamoyl phosphate + 2 ADP + phosphate + 2 H(+). It participates in amino-acid biosynthesis; L-arginine biosynthesis; carbamoyl phosphate from bicarbonate: step 1/1. Its pathway is pyrimidine metabolism; UMP biosynthesis via de novo pathway; (S)-dihydroorotate from bicarbonate: step 1/3. Functionally, large subunit of the glutamine-dependent carbamoyl phosphate synthetase (CPSase). CPSase catalyzes the formation of carbamoyl phosphate from the ammonia moiety of glutamine, carbonate, and phosphate donated by ATP, constituting the first step of 2 biosynthetic pathways, one leading to arginine and/or urea and the other to pyrimidine nucleotides. The large subunit (synthetase) binds the substrates ammonia (free or transferred from glutamine from the small subunit), hydrogencarbonate and ATP and carries out an ATP-coupled ligase reaction, activating hydrogencarbonate by forming carboxy phosphate which reacts with ammonia to form carbamoyl phosphate. In Paenarthrobacter aurescens (strain TC1), this protein is Carbamoyl phosphate synthase large chain.